A 303-amino-acid chain; its full sequence is Acetylglutamate kinase (303 aa).

Residues 76 to 77 (GG), R98, and N199 each bind substrate.

The protein belongs to the acetylglutamate kinase family. ArgB subfamily.

It localises to the cytoplasm. It carries out the reaction N-acetyl-L-glutamate + ATP = N-acetyl-L-glutamyl 5-phosphate + ADP. Its pathway is amino-acid biosynthesis; L-arginine biosynthesis; N(2)-acetyl-L-ornithine from L-glutamate: step 2/4. Its function is as follows. Catalyzes the ATP-dependent phosphorylation of N-acetyl-L-glutamate. The polypeptide is Acetylglutamate kinase (Clavibacter sepedonicus (Clavibacter michiganensis subsp. sepedonicus)).